The sequence spans 277 residues: Hemin import ATP-binding protein HmuV (277 aa).

Residues 25–260 (IHAQGLNLIL…DIIERVYGWP (236 aa)) enclose the ABC transporter domain. 57 to 64 (GPNGAGKS) is an ATP binding site.

The protein belongs to the ABC transporter superfamily. Heme (hemin) importer (TC 3.A.1.14.5) family. As to quaternary structure, the complex is composed of two ATP-binding proteins (HmuV), two transmembrane proteins (HmuU) and a solute-binding protein (HmuT).

The protein localises to the cell inner membrane. Functionally, part of the ABC transporter complex HmuTUV involved in hemin import. Responsible for energy coupling to the transport system. The sequence is that of Hemin import ATP-binding protein HmuV from Photobacterium profundum (strain SS9).